The primary structure comprises 465 residues: E3 ubiquitin-protein ligase parkin (465 aa).

Positions 1-76 (MIVFVRFNSS…VHIVQRPWRK (76 aa)) constitute a Ubiquitin-like domain. Serine 65 is modified (phosphoserine; by PINK1). Residues 77–99 (GQEMNATGGDDPRNAAGGCEREP) form a disordered region. Positions 77–237 (GQEMNATGGD…LIATNSRNIT (161 aa)) are necessary for PINK1-dependent localization to mitochondria. The segment at 141-225 (SIYNSFYVYC…PTSDKETSVA (85 aa)) adopts an RING-type 0; atypical zinc-finger fold. Threonine 175 carries the post-translational modification Phosphothreonine; by PINK1. Positions 204–238 (TSAEFFFKCGAHPTSDKETSVALHLIATNSRNITC) are SYT11 binding 1. Position 217 is a phosphothreonine (threonine 217). A TRIAD supradomain region spans residues 234-465 (RNITCITCTD…VCMGDHWFDV (232 aa)). Zn(2+) contacts are provided by cysteine 238, cysteine 241, cysteine 253, histidine 257, cysteine 260, cysteine 263, cysteine 289, cysteine 293, cysteine 332, and cysteine 337. An RING-type 1 zinc finger spans residues 238–293 (CITCTDVRSPVLVFQCNSRHVICLDCFHLYCVTRLNDRQFVHDPQLGYSLPCVAGC). The interval 257-293 (HVICLDCFHLYCVTRLNDRQFVHDPQLGYSLPCVAGC) is SYT11 binding 2. The IBR-type zinc finger occupies 313-377 (NRYQQYGAEE…CKEAYHEGEC (65 aa)). A Glycyl lysine isopeptide (Lys-Gly) (interchain with G-Cter in ISG15) cross-link involves residue lysine 349. The Zn(2+) site is built by cysteine 352, cysteine 360, cysteine 365, and cysteine 368. Lysine 369 participates in a covalent cross-link: Glycyl lysine isopeptide (Lys-Gly) (interchain with G-Cter in ISG15). Zn(2+)-binding residues include histidine 373 and cysteine 377. An REP region spans residues 378–410 (SAVFEASGTTTQAYRVDERAAEQARWEAASKET). Zn(2+)-binding residues include cysteine 418 and cysteine 421. The RING-type 2; atypical zinc-finger motif lies at 418–449 (CPRCHVPVEKNGGCMHMKCPQPQCRLEWCWNC). Cysteine 431 is an active-site residue. Residues cysteine 436, cysteine 441, cysteine 446, cysteine 449, cysteine 457, and histidine 461 each contribute to the Zn(2+) site.

The protein belongs to the RBR family. Parkin subfamily. As to quaternary structure, forms an E3 ubiquitin ligase complex with UBE2L3 or UBE2L6. Mediates 'Lys-63'-linked polyubiquitination by associating with UBE2V1. Part of a SCF-like complex, consisting of PRKN, CUL1 and FBXW7. Interacts with SNCAIP. Binds to the C2A and C2B domains of SYT11. Interacts and regulates the turnover of SEPTIN5. Part of a complex, including STUB1, HSP70 and GPR37. The amount of STUB1 in the complex increases during ER stress. STUB1 promotes the dissociation of HSP70 from PRKN and GPR37, thus facilitating PRKN-mediated GPR37 ubiquitination. HSP70 transiently associates with unfolded GPR37 and inhibits the E3 activity of PRKN, whereas, STUB1 enhances the E3 activity of PRKN through promotion of dissociation of HSP70 from PRKN-GPR37 complexes. Interacts with PSMD4 and PACRG. Interacts with LRRK2. Interacts with RANBP2. Interacts with SUMO1 but not SUMO2, which promotes nuclear localization and autoubiquitination. Interacts (via first RING-type domain) with AIMP2 (via N-terminus). Interacts with PSMA7 and RNF41. Interacts with PINK1. Forms a complex with PINK1 and PARK7. Interacts with CHPF, the interaction with isoform 2 may facilitate PRKN transport into the mitochondria. Interacts with MFN2 (phosphorylated), promotes PRKN localization in dysfunctional depolarized mitochondria. Interacts with FBXO7; this promotes translocation to dysfunctional depolarized mitochondria. Interacts with ZNF746. Interacts with heat shock protein 70 family members, including HSPA1L, HSPA1A and HSPA8; interaction HSPA1L promotes translocation to damaged mitochondria. Interacts with BAG4 and, to a lesser extent, BAG5; interaction with BAG4 inhibits translocation to damaged mitochondria. Forms a complex with PRKN and PARK7. Interacts with AMBRA1. ISGylated. Conjugated to ubiquitin-like protein ISG15 upon IFN-beta stimulation. ISGylation positively regulates its E3 ligase activity. In terms of processing, auto-ubiquitinates in an E2-dependent manner leading to its own degradation. Also polyubiquitinated by RNF41 for proteasomal degradation. Post-translationally, S-nitrosylated. The inhibition of PRKN ubiquitin E3 ligase activity by S-nitrosylation could contribute to the degenerative process in PD by impairing the ubiquitination of PRKN substrates. Phosphorylated. Activation requires phosphorylation at Ser-65 by PINK1 and binding to PINK1 phosphorylated ubiquitin. Phosphorylation at Thr-175 by PINK1 and at Thr-217 is important for mitochondrial localization. As to expression, highly expressed in the brain including the substantia nigra. Expressed in heart, testis and skeletal muscle. Expression is down-regulated or absent in tumor biopsies, and absent in the brain of PARK2 patients. Overexpression protects dopamine neurons from kainate-mediated apoptosis. Found in serum (at protein level).

It is found in the cytoplasm. The protein localises to the cytosol. Its subcellular location is the nucleus. The protein resides in the endoplasmic reticulum. It localises to the mitochondrion. It is found in the mitochondrion outer membrane. The protein localises to the cell projection. Its subcellular location is the neuron projection. The protein resides in the postsynaptic density. It localises to the presynapse. It carries out the reaction [E2 ubiquitin-conjugating enzyme]-S-ubiquitinyl-L-cysteine + [acceptor protein]-L-lysine = [E2 ubiquitin-conjugating enzyme]-L-cysteine + [acceptor protein]-N(6)-ubiquitinyl-L-lysine.. The protein operates within protein modification; protein ubiquitination. With respect to regulation, in the autoinhibited state the side chain of Phe-463 inserts into a hydrophobic groove in RING-0, occluding the ubiquitin acceptor site Cys-431, whereas the REP repressor element binds RING-1 and blocks its E2-binding site. Activation of PRKN requires 2 steps: (1) phosphorylation at Ser-65 by PINK1 and (2) binding to phosphorylated ubiquitin, leading to unlock repression of the catalytic Cys-431 by the RING-0 region via an allosteric mechanism and converting PRKN to its fully-active form. According to another report, phosphorylation at Ser-65 by PINK1 is not essential for activation and only binding to phosphorylated ubiquitin is essential to unlock repression. In addition, ISG15 conjugation positively regulates its ubiquitin E3 ligase activity by suppressing the intramolecular interaction that maintains its autoinhibited conformation. Its function is as follows. Functions within a multiprotein E3 ubiquitin ligase complex, catalyzing the covalent attachment of ubiquitin moieties onto substrate proteins. Substrates include SYT11 and VDAC1. Other substrates are BCL2, CCNE1, GPR37, RHOT1/MIRO1, MFN1, MFN2, STUB1, SNCAIP, SEPTIN5, TOMM20, USP30, ZNF746, MIRO1 and AIMP2. Mediates monoubiquitination as well as 'Lys-6', 'Lys-11', 'Lys-48'-linked and 'Lys-63'-linked polyubiquitination of substrates depending on the context. Participates in the removal and/or detoxification of abnormally folded or damaged protein by mediating 'Lys-63'-linked polyubiquitination of misfolded proteins such as PARK7: 'Lys-63'-linked polyubiquitinated misfolded proteins are then recognized by HDAC6, leading to their recruitment to aggresomes, followed by degradation. Mediates 'Lys-63'-linked polyubiquitination of a 22 kDa O-linked glycosylated isoform of SNCAIP, possibly playing a role in Lewy-body formation. Mediates monoubiquitination of BCL2, thereby acting as a positive regulator of autophagy. Protects against mitochondrial dysfunction during cellular stress, by acting downstream of PINK1 to coordinate mitochondrial quality control mechanisms that remove and replace dysfunctional mitochondrial components. Depending on the severity of mitochondrial damage and/or dysfunction, activity ranges from preventing apoptosis and stimulating mitochondrial biogenesis to regulating mitochondrial dynamics and eliminating severely damaged mitochondria via mitophagy. Activation and recruitment onto the outer membrane of damaged/dysfunctional mitochondria (OMM) requires PINK1-mediated phosphorylation of both PRKN and ubiquitin. After mitochondrial damage, functions with PINK1 to mediate the decision between mitophagy or preventing apoptosis by inducing either the poly- or monoubiquitination of VDAC1, respectively; polyubiquitination of VDAC1 promotes mitophagy, while monoubiquitination of VDAC1 decreases mitochondrial calcium influx which ultimately inhibits apoptosis. When cellular stress results in irreversible mitochondrial damage, promotes the autophagic degradation of dysfunctional depolarized mitochondria (mitophagy) by promoting the ubiquitination of mitochondrial proteins such as TOMM20, RHOT1/MIRO1, MFN1 and USP30. Preferentially assembles 'Lys-6'-, 'Lys-11'- and 'Lys-63'-linked polyubiquitin chains, leading to mitophagy. The PINK1-PRKN pathway also promotes fission of damaged mitochondria by PINK1-mediated phosphorylation which promotes the PRKN-dependent degradation of mitochondrial proteins involved in fission such as MFN2. This prevents the refusion of unhealthy mitochondria with the mitochondrial network or initiates mitochondrial fragmentation facilitating their later engulfment by autophagosomes. Regulates motility of damaged mitochondria via the ubiquitination and subsequent degradation of MIRO1 and MIRO2; in motor neurons, this likely inhibits mitochondrial intracellular anterograde transport along the axons which probably increases the chance of the mitochondria undergoing mitophagy in the soma. Involved in mitochondrial biogenesis via the 'Lys-48'-linked polyubiquitination of transcriptional repressor ZNF746/PARIS which leads to its subsequent proteasomal degradation and allows activation of the transcription factor PPARGC1A. Limits the production of reactive oxygen species (ROS). Regulates cyclin-E during neuronal apoptosis. In collaboration with CHPF isoform 2, may enhance cell viability and protect cells from oxidative stress. Independently of its ubiquitin ligase activity, protects from apoptosis by the transcriptional repression of p53/TP53. May protect neurons against alpha synuclein toxicity, proteasomal dysfunction, GPR37 accumulation, and kainate-induced excitotoxicity. May play a role in controlling neurotransmitter trafficking at the presynaptic terminal and in calcium-dependent exocytosis. May represent a tumor suppressor gene. The protein is E3 ubiquitin-protein ligase parkin of Homo sapiens (Human).